We begin with the raw amino-acid sequence, 281 residues long: Diaminopimelate epimerase (281 aa).

Residues Asn13, Gln46, and Asn66 each coordinate substrate. The active-site Proton donor is the Cys75. Substrate is bound by residues 76–77 (GN), Asn160, Asn193, and 211–212 (ER). Cys220 functions as the Proton acceptor in the catalytic mechanism. 221 to 222 (GT) serves as a coordination point for substrate.

Belongs to the diaminopimelate epimerase family. In terms of assembly, homodimer.

It localises to the cytoplasm. The catalysed reaction is (2S,6S)-2,6-diaminopimelate = meso-2,6-diaminopimelate. It functions in the pathway amino-acid biosynthesis; L-lysine biosynthesis via DAP pathway; DL-2,6-diaminopimelate from LL-2,6-diaminopimelate: step 1/1. Functionally, catalyzes the stereoinversion of LL-2,6-diaminopimelate (L,L-DAP) to meso-diaminopimelate (meso-DAP), a precursor of L-lysine and an essential component of the bacterial peptidoglycan. The polypeptide is Diaminopimelate epimerase (Acinetobacter baumannii (strain AB307-0294)).